Consider the following 133-residue polypeptide: Small ribosomal subunit protein uS9 (133 aa).

A compositionally biased stretch (basic and acidic residues) spans Arg98 to Ala113. A disordered region spans residues Arg98 to Arg133. Positions Lys114–Arg133 are enriched in basic residues.

Belongs to the universal ribosomal protein uS9 family.

The polypeptide is Small ribosomal subunit protein uS9 (Synechococcus sp. (strain CC9902)).